The following is a 167-amino-acid chain: Phosphopantetheine adenylyltransferase (167 aa).

Thr9 serves as a coordination point for substrate. ATP-binding positions include 9–10 (TF) and His17. Residues Lys41, Leu73, and Arg87 each coordinate substrate. ATP-binding positions include 88–90 (GLR), Glu98, and 123–129 (YQFISGT).

The protein belongs to the bacterial CoaD family. As to quaternary structure, homohexamer. Mg(2+) is required as a cofactor.

The protein localises to the cytoplasm. It catalyses the reaction (R)-4'-phosphopantetheine + ATP + H(+) = 3'-dephospho-CoA + diphosphate. It participates in cofactor biosynthesis; coenzyme A biosynthesis; CoA from (R)-pantothenate: step 4/5. In terms of biological role, reversibly transfers an adenylyl group from ATP to 4'-phosphopantetheine, yielding dephospho-CoA (dPCoA) and pyrophosphate. The polypeptide is Phosphopantetheine adenylyltransferase (Bordetella avium (strain 197N)).